Here is a 73-residue protein sequence, read N- to C-terminus: Probable cytochrome b-c1 complex subunit 8 (73 aa).

Residues 1-42 (MGQASKVFGKQITYSVSPFQQKLFVNYFKNAIPHLRRGVKDN) are Mitochondrial matrix-facing. A helical transmembrane segment spans residues 43 to 60 (FFCSVPYFAALYITVNWA). Topologically, residues 61–73 (NETYHNEMKDHWY) are mitochondrial intermembrane.

The protein belongs to the UQCRQ/QCR8 family. In terms of assembly, component of the ubiquinol-cytochrome c oxidoreductase (cytochrome b-c1 complex, complex III, CIII), a multisubunit enzyme composed of 3 respiratory subunits cytochrome b, cytochrome c1 and Rieske protein, 2 core protein subunits, and additional low-molecular weight protein subunits. The complex exists as an obligatory dimer and forms supercomplexes (SCs) in the inner mitochondrial membrane with cytochrome c oxidase (complex IV, CIV).

It is found in the mitochondrion inner membrane. Its function is as follows. Component of the ubiquinol-cytochrome c oxidoreductase, a multisubunit transmembrane complex that is part of the mitochondrial electron transport chain which drives oxidative phosphorylation. The respiratory chain contains 3 multisubunit complexes succinate dehydrogenase (complex II, CII), ubiquinol-cytochrome c oxidoreductase (cytochrome b-c1 complex, complex III, CIII) and cytochrome c oxidase (complex IV, CIV), that cooperate to transfer electrons derived from NADH and succinate to molecular oxygen, creating an electrochemical gradient over the inner membrane that drives transmembrane transport and the ATP synthase. The cytochrome b-c1 complex catalyzes electron transfer from ubiquinol to cytochrome c, linking this redox reaction to translocation of protons across the mitochondrial inner membrane, with protons being carried across the membrane as hydrogens on the quinol. In the process called Q cycle, 2 protons are consumed from the matrix, 4 protons are released into the intermembrane space and 2 electrons are passed to cytochrome c. This chain is Probable cytochrome b-c1 complex subunit 8, found in Dictyostelium discoideum (Social amoeba).